A 65-amino-acid polypeptide reads, in one-letter code: Large ribosomal subunit protein bL35 (65 aa).

Residues 1 to 65 (MQKIKTNRSA…KELKRLLPGM (65 aa)) are disordered. Basic residues-rich tracts occupy residues 10–19 (AAKRFKRTKS) and 33–47 (LTKKNRKRKRSLRKS). Positions 54–65 (NNKELKRLLPGM) are enriched in basic and acidic residues.

It belongs to the bacterial ribosomal protein bL35 family.

This chain is Large ribosomal subunit protein bL35, found in Desulfosudis oleivorans (strain DSM 6200 / JCM 39069 / Hxd3) (Desulfococcus oleovorans).